The sequence spans 513 residues: Histidine ammonia-lyase (513 aa).

A cross-link (5-imidazolinone (Ala-Gly)) is located at residues 142–144 (ASG). A 2,3-didehydroalanine (Ser) modification is found at serine 143.

It belongs to the PAL/histidase family. Post-translationally, contains an active site 4-methylidene-imidazol-5-one (MIO), which is formed autocatalytically by cyclization and dehydration of residues Ala-Ser-Gly.

It localises to the cytoplasm. It catalyses the reaction L-histidine = trans-urocanate + NH4(+). The protein operates within amino-acid degradation; L-histidine degradation into L-glutamate; N-formimidoyl-L-glutamate from L-histidine: step 1/3. This Hyphomonas neptunium (strain ATCC 15444) protein is Histidine ammonia-lyase.